The following is a 1032-amino-acid chain: MGRESRHYRKRSASRGRSGSRSRSRSPSDKRSKRGDDRRSRSRDRDRRRERSRSRDKRRSRSRDRKRLRRSRSRERDRSRERRRSRSRDRRRSRSRSRGRRSRSSSPGSKSKKAENRSRSKEKAEGGDSSKEKKKDKDDKEDEKEKDAGNFDQNKLEEEMRKRKERVEKWREEQRKKAMENIGELKKEIEEMKQGKKWSLEDDDDDEDDPAEAEKEGNEMEDEELDPLDAYMEEVKEEVKKFNMRSVKGGAGNEKKSGPTVTKVVTVVTTKKAVVDADKKKGELMENDQDAMEYSSEEEEVDLQTALTGYQTKQRKLLEPVDHGKIEYEPFRKNFYVEVPELAKMSQEEVNVFRLEMEGITVKGKGCPKPIKSWVQCGISMKILNSLKKHGYEKPTPIQTQAIPAIMSGRDLIGIAKTGSGKTIAFLLPMFRHIMDQRSLEEGEGPIAVIMTPTRELALQITKECKKFSKTLGLRVVCVYGGTGISEQIAELKRGAEIIVCTPGRMIDMLAANSGRVTNLRRVTYVVLDEADRMFDMGFEPQVMRIVDNVRPDRQTVMFSATFPRAMEALARRILSKPIEVQVGGRSVVCSDVEQQVIVIEEEKKFLKLLELLGHYQESGSVIIFVDKQEHADGLLKDLMRASYPCMSLHGGIDQYDRDSIINDFKNGTCKLLVATSVAARGLDVKHLILVVNYSCPNHYEDYVHRAGRTGRAGNKGYAYTFITEDQARYAGDIIKALELSGTAVPPDLEKLWSDFKDQQKAEGKIIKKSSGFSGKGFKFDETEQALANERKKLQKAALGLQDSDDEDAAVDIDEQIESMFNSKKRVKDMAAPGTSSAPAPTAGNAEKLEIAKRLALRINAQKNLGIESQVDVMQQATNAILRGGPLLAPTVSAKTIAEQLAEKINAKLNYVPLEKQEEERQEGGQSESFKRYEEELEINDFPQTARWKVTSKEALQRISEYSEAAITIRGTYFPPGKEPKEGERKIYLAIESANELAVQKAKAEITRLIKEELIRLQNSYQPTNKGRYKVL.

Positions 1 to 24 (MGRESRHYRKRSASRGRSGSRSRS) are enriched in basic residues. The interval 1–227 (MGRESRHYRK…NEMEDEELDP (227 aa)) is disordered. G2 carries the N-myristoyl glycine lipid modification. The span at 26–49 (SPSDKRSKRGDDRRSRSRDRDRRR) shows a compositional bias: basic and acidic residues. Composition is skewed to basic residues over residues 50 to 73 (ERSRSRDKRRSRSRDRKRLRRSRS) and 81 to 103 (ERRRSRSRDRRRSRSRSRGRRSR). The span at 112-200 (KKAENRSRSK…EMKQGKKWSL (89 aa)) shows a compositional bias: basic and acidic residues. The stretch at 152-197 (DQNKLEEEMRKRKERVEKWREEQRKKAMENIGELKKEIEEMKQGKK) forms a coiled coil. K186 is covalently cross-linked (Glycyl lysine isopeptide (Lys-Gly) (interchain with G-Cter in SUMO2)). At S199 the chain carries Phosphoserine. Over residues 201 to 211 (EDDDDDEDDPA) the composition is skewed to acidic residues. At K263 the chain carries N6-acetyllysine. Y294 carries the phosphotyrosine modification. Residues S295 and S296 each carry the phosphoserine modification. K325 participates in a covalent cross-link: Glycyl lysine isopeptide (Lys-Gly) (interchain with G-Cter in SUMO2). S346 carries the phosphoserine modification. The Q motif motif lies at 372 to 400 (KSWVQCGISMKILNSLKKHGYEKPTPIQT). Residues 403–581 (IPAIMSGRDL…RRILSKPIEV (179 aa)) form the Helicase ATP-binding domain. The DEAD box signature appears at 529-532 (DEAD). In terms of domain architecture, Helicase C-terminal spans 592–753 (DVEQQVIVIE…AVPPDLEKLW (162 aa)). K776 bears the N6-acetyllysine mark. Residue K779 forms a Glycyl lysine isopeptide (Lys-Gly) (interchain with G-Cter in SUMO2) linkage. S804 carries the phosphoserine modification. Position 904 is an N6-acetyllysine (K904). Glycyl lysine isopeptide (Lys-Gly) (interchain with G-Cter in SUMO2) cross-links involve residues K908 and K916. S929 bears the Phosphoserine mark.

Belongs to the DEAD box helicase family. DDX46/PRP5 subfamily. Component of the 17S U2 SnRNP complex, a ribonucleoprotein complex that contains small nuclear RNA (snRNA) U2 and a number of specific proteins. Within the 17S U2 SnRNP complex, DDX46 is part of the SF3B subcomplex, which is required for 'A' complex assembly formed by the stable binding of U2 snRNP to the branchpoint sequence in pre-mRNA. Recruited to the 17S U2 SnRNP complex following release of DDX42; DDX42 and DDX46 bind the SF3B subcomplex in a competitive manner.

The protein resides in the nucleus speckle. The protein localises to the nucleus. It localises to the cajal body. It carries out the reaction ATP + H2O = ADP + phosphate + H(+). Component of the 17S U2 SnRNP complex of the spliceosome, a large ribonucleoprotein complex that removes introns from transcribed pre-mRNAs. The 17S U2 SnRNP complex (1) directly participates in early spliceosome assembly and (2) mediates recognition of the intron branch site during pre-mRNA splicing by promoting the selection of the pre-mRNA branch-site adenosine, the nucleophile for the first step of splicing. Within the 17S U2 SnRNP complex, DDX46 plays essential roles during assembly of pre-spliceosome and proofreading of the branch site. The sequence is that of Probable ATP-dependent RNA helicase DDX46 (Ddx46) from Rattus norvegicus (Rat).